A 324-amino-acid polypeptide reads, in one-letter code: Glyoxylate/hydroxypyruvate reductase B (324 aa).

Active-site residues include Arg-237 and Glu-266. His-285 (proton donor) is an active-site residue.

This sequence belongs to the D-isomer specific 2-hydroxyacid dehydrogenase family. GhrB subfamily. In terms of assembly, homodimer.

It localises to the cytoplasm. The catalysed reaction is glycolate + NADP(+) = glyoxylate + NADPH + H(+). It catalyses the reaction (R)-glycerate + NAD(+) = 3-hydroxypyruvate + NADH + H(+). The enzyme catalyses (R)-glycerate + NADP(+) = 3-hydroxypyruvate + NADPH + H(+). Functionally, catalyzes the NADPH-dependent reduction of glyoxylate and hydroxypyruvate into glycolate and glycerate, respectively. The polypeptide is Glyoxylate/hydroxypyruvate reductase B (Escherichia coli O6:H1 (strain CFT073 / ATCC 700928 / UPEC)).